The sequence spans 154 residues: Cytochrome c-550 (154 aa).

The first 20 residues, 1–20 (MKISIYATLAALSLALPAVA), serve as a signal peptide directing secretion. Glutamine 21 is subject to Pyrrolidone carboxylic acid. Residues cysteine 35, cysteine 38, histidine 39, and methionine 120 each contribute to the heme c site. The propeptide occupies 150-154 (EGAAN).

Binds 1 heme c group covalently per subunit.

In Paracoccus versutus (Thiobacillus versutus), this protein is Cytochrome c-550 (cyc).